Reading from the N-terminus, the 226-residue chain is Glutathione peroxidase 3 (226 aa).

A signal peptide spans 1–24; the sequence is MARLLQASCLLSLLLAGFLPQSRG. The active site involves U73. A non-standard amino acid (selenocysteine) is located at residue U73.

It belongs to the glutathione peroxidase family. As to quaternary structure, homotetramer. Secreted in plasma.

The protein localises to the secreted. It carries out the reaction 2 glutathione + H2O2 = glutathione disulfide + 2 H2O. The catalysed reaction is tert-butyl hydroperoxide + 2 glutathione = tert-butanol + glutathione disulfide + H2O. In terms of biological role, protects cells and enzymes from oxidative damage, by catalyzing the reduction of hydrogen peroxide, lipid peroxides and organic hydroperoxide, by glutathione. The sequence is that of Glutathione peroxidase 3 from Sapajus apella (Brown-capped capuchin).